The sequence spans 140 residues: 3-hydroxyacyl-[acyl-carrier-protein] dehydratase FabZ (140 aa).

H48 is a catalytic residue.

This sequence belongs to the thioester dehydratase family. FabZ subfamily.

Its subcellular location is the cytoplasm. It carries out the reaction a (3R)-hydroxyacyl-[ACP] = a (2E)-enoyl-[ACP] + H2O. Involved in unsaturated fatty acids biosynthesis. Catalyzes the dehydration of short chain beta-hydroxyacyl-ACPs and long chain saturated and unsaturated beta-hydroxyacyl-ACPs. The sequence is that of 3-hydroxyacyl-[acyl-carrier-protein] dehydratase FabZ from Caldicellulosiruptor saccharolyticus (strain ATCC 43494 / DSM 8903 / Tp8T 6331).